The following is a 114-amino-acid chain: Prefoldin subunit 6 (114 aa).

Serine 2 bears the N-acetylserine mark.

Belongs to the prefoldin subunit beta family. In terms of assembly, heterohexamer of two PFD-alpha type and four PFD-beta type subunits.

Its subcellular location is the nucleus. Binds specifically to cytosolic chaperonin (c-CPN) and transfers target proteins to it. Binds to nascent polypeptide chain and promotes folding in an environment in which there are many competing pathways for nonnative proteins. The protein is Prefoldin subunit 6 (YKE2) of Saccharomyces cerevisiae (strain ATCC 204508 / S288c) (Baker's yeast).